The following is a 245-amino-acid chain: 6-carboxyhexanoate--CoA ligase (245 aa).

Belongs to the BioW family. As to quaternary structure, homodimer. Mg(2+) serves as cofactor.

It carries out the reaction heptanedioate + ATP + CoA = 6-carboxyhexanoyl-CoA + AMP + diphosphate. Its pathway is metabolic intermediate metabolism; pimeloyl-CoA biosynthesis; pimeloyl-CoA from pimelate: step 1/1. Its function is as follows. Catalyzes the transformation of pimelate into pimeloyl-CoA with concomitant hydrolysis of ATP to AMP. The protein is 6-carboxyhexanoate--CoA ligase of Methanococcus vannielii (strain ATCC 35089 / DSM 1224 / JCM 13029 / OCM 148 / SB).